The primary structure comprises 327 residues: Phenylalanine--tRNA ligase alpha subunit (327 aa).

Glu-252 contributes to the Mg(2+) binding site.

The protein belongs to the class-II aminoacyl-tRNA synthetase family. Phe-tRNA synthetase alpha subunit type 1 subfamily. Tetramer of two alpha and two beta subunits. Mg(2+) serves as cofactor.

The protein resides in the cytoplasm. It carries out the reaction tRNA(Phe) + L-phenylalanine + ATP = L-phenylalanyl-tRNA(Phe) + AMP + diphosphate + H(+). In Salmonella choleraesuis (strain SC-B67), this protein is Phenylalanine--tRNA ligase alpha subunit.